The following is a 499-amino-acid chain: GTPase Der (499 aa).

EngA-type G domains are found at residues 3 to 166 (PVVA…LETL) and 213 to 386 (IKFA…QSAT). Residues 9–16 (GRPNVGKS), 56–60 (DTGGI), 118–121 (NKTD), 219–226 (GRPNVGKS), 266–270 (DTAGV), and 331–334 (NKWD) contribute to the GTP site. The 85-residue stretch at 387-471 (RRTSTAMLTR…PVRVEFQESA (85 aa)) folds into the KH-like domain.

Belongs to the TRAFAC class TrmE-Era-EngA-EngB-Septin-like GTPase superfamily. EngA (Der) GTPase family. Associates with the 50S ribosomal subunit.

GTPase that plays an essential role in the late steps of ribosome biogenesis. The polypeptide is GTPase Der (Aeromonas hydrophila subsp. hydrophila (strain ATCC 7966 / DSM 30187 / BCRC 13018 / CCUG 14551 / JCM 1027 / KCTC 2358 / NCIMB 9240 / NCTC 8049)).